Here is a 981-residue protein sequence, read N- to C-terminus: Proline-rich transmembrane protein 3 (981 aa).

The signal sequence occupies residues 1-27; sequence MASSPWGCVCGLLLLLLPLLGTGPALG. Residues 28-474 lie on the Extracellular side of the membrane; it reads RGFPRPLENS…RVLSFSWELH (447 aa). Disordered stretches follow at residues 43 to 107 and 169 to 457; these read PGAH…GAQR and PPSL…TAPP. Basic and acidic residues predominate over residues 65–85; it reads PRADSHRNSDVRHAPAEEMPE. The interval 297–302 is O-glycosylated at one site; sequence SWEVSS. An O-linked (GalNAc...) serine glycan is attached at serine 329. Basic and acidic residues predominate over residues 331 to 340; it reads APDRPSKPER. Residue threonine 363 is glycosylated (O-linked (GalNAc...) threonine). A glycan (N-linked (GlcNAc...) asparagine) is linked at asparagine 379. The segment covering 411-427 has biased composition (polar residues); it reads APSTSRRGLIRVTTQRA. Positions 437–457 are enriched in low complexity; the sequence is TASSMASAPASSPPANATAPP. Residues 475 to 495 form a helical membrane-spanning segment; it reads VYGVGVLFLLPALLALAALAA. Residues 496–501 lie on the Cytoplasmic side of the membrane; it reads APAGPR. Residues 502-522 traverse the membrane as a helical segment; sequence LALVAAVLVLVASALRSAYML. Topologically, residues 523–542 are extracellular; sequence TDPYGSQARLGVRGGLVLYN. Residues 543–563 form a helical membrane-spanning segment; that stretch reads LPFPLLLTALAALTLLGLGAG. The Cytoplasmic portion of the chain corresponds to 564-570; it reads LPPPLQN. Residues 571 to 591 form a helical membrane-spanning segment; that stretch reads PLLLGAVALVHGVGLLATDLL. Topologically, residues 592 to 598 are extracellular; sequence STWSVLN. The helical transmembrane segment at 599-619 threads the bilayer; it reads LLTQGLSCAWGAAVALGTLCL. The Cytoplasmic portion of the chain corresponds to 620-638; the sequence is CRRRLLDGPRGWDASPGPR. A helical membrane pass occupies residues 639–659; that stretch reads LLAVAGALGLLASGLQLAAAL. Residues 660–679 are Extracellular-facing; sequence WLYPGPGRVGRFSWAWWGVH. A helical membrane pass occupies residues 680–700; that stretch reads FWLRLLELTWALALALAAVAA. At 701–981 the chain is on the cytoplasmic side; that stretch reads ARPRPPTEHA…RSASSDTIEL (281 aa). The tract at residues 759-807 is disordered; the sequence is AESGQLATPSSGAWGSAASLGRGPQGGPGLSRNGVGPAPSLSELDLRPP. The segment covering 765–780 has biased composition (low complexity); it reads ATPSSGAWGSAASLGR. A Phosphoserine modification is found at serine 777. An Omega-N-methylarginine modification is found at arginine 780. A phosphoserine mark is found at serine 789, serine 798, serine 808, serine 815, serine 854, serine 874, serine 902, serine 903, and serine 911. The tract at residues 836–865 is disordered; it reads LRGLASPPPGGALRPRRGSHPKAELDDAGS. A disordered region spans residues 937 to 981; it reads TVQLLPAPTPAPDSTAARQGDGQGEVQPRGKPGESRSASSDTIEL. Polar residues predominate over residues 972–981; the sequence is RSASSDTIEL.

The protein localises to the membrane. This Homo sapiens (Human) protein is Proline-rich transmembrane protein 3 (PRRT3).